The following is a 250-amino-acid chain: Small ribosomal subunit protein uS2 (250 aa).

Belongs to the universal ribosomal protein uS2 family.

This is Small ribosomal subunit protein uS2 from Chloroherpeton thalassium (strain ATCC 35110 / GB-78).